A 43-amino-acid chain; its full sequence is Myotoxin-1 (43 aa).

3 disulfide bridges follow: Cys-4/Cys-36, Cys-11/Cys-30, and Cys-18/Cys-37.

The protein belongs to the crotamine-myotoxin family. Monomer. In terms of tissue distribution, expressed by the venom gland.

The protein localises to the secreted. In terms of biological role, cationic peptide that possesses multiple functions. It acts as a cell-penetrating peptide (CPP), and as a potent voltage-gated potassium channel (Kv) inhibitor. It exhibits antimicrobial activities, hind limb paralysis, and severe muscle necrosis by a non-enzymatic mechanism. This chain is Myotoxin-1, found in Crotalus concolor (Midget faded rattlesnake).